The chain runs to 289 residues: Release factor glutamine methyltransferase (289 aa).

Residues 122–126, D145, W174, and N189 each bind S-adenosyl-L-methionine; that span reads GVGSG. Substrate is bound at residue 189-192; it reads NPPY.

It belongs to the protein N5-glutamine methyltransferase family. PrmC subfamily.

The catalysed reaction is L-glutaminyl-[peptide chain release factor] + S-adenosyl-L-methionine = N(5)-methyl-L-glutaminyl-[peptide chain release factor] + S-adenosyl-L-homocysteine + H(+). Methylates the class 1 translation termination release factors RF1/PrfA and RF2/PrfB on the glutamine residue of the universally conserved GGQ motif. The polypeptide is Release factor glutamine methyltransferase (Caulobacter vibrioides (strain ATCC 19089 / CIP 103742 / CB 15) (Caulobacter crescentus)).